The chain runs to 603 residues: Complement factor I (603 aa).

Residues 1–18 form the signal peptide; that stretch reads MKLAHLSLFLLALHLSSS. Disulfide bonds link C36-C260, C46-C57, C51-C62, C64-C96, C70-C89, C78-C109, C144-C186, C157-C219, C191-C201, C234-C252, C246-C261, C264-C276, C271-C289, C283-C298, C348-C473, C386-C402, C394-C464, C487-C551, C515-C530, and C541-C570. One can recognise a Kazal-like domain in the interval 58-111; that stretch reads IEGTCICKLPYQCPRAGTPVCAMNGRSYPTYCHQKSFECLHPEIKFSHNGTCAA. N-linked (GlcNAc...) asparagine glycosylation is found at N106, N116, N174, and N182. Positions 117-217 constitute an SRCR domain; the sequence is VSLIYGRTKT…TELSNGLAGV (101 aa). LDL-receptor class A domains follow at residues 218-262 and 263-299; these read VCYK…LCCK and GCRG…SRCE. Positions 244, 247, 249, 251, 257, and 258 each coordinate Ca(2+). N267 carries N-linked (GlcNAc...) asparagine glycosylation. Ca(2+)-binding residues include Y281, N284, E286, D288, D294, and E295. Residues 361–594 enclose the Peptidase S1 domain; sequence VIGGKPANVG…YFDWISYHVG (234 aa). Residues H401 and D449 each act as charge relay system in the active site. N514 carries N-linked (GlcNAc...) asparagine glycosylation. S545 (charge relay system) is an active-site residue. N556 carries an N-linked (GlcNAc...) asparagine glycan.

It belongs to the peptidase S1 family. Heterodimer of a light and heavy chains; disulfide-linked. The fully processed and mature protein circulates as a zymogen, and is allosterically activated by substrate-induced remodeling of the active site. Interacts with C3b. Interacts with complement factor H. Expressed in the liver by hepatocytes. Also present in other cells such as monocytes, fibroblasts or keratinocytes.

Its subcellular location is the secreted. It localises to the extracellular space. It carries out the reaction Inactivates complement subcomponents C3b, iC3b and C4b by proteolytic cleavage.. In terms of biological role, trypsin-like serine protease that plays an essential role in regulating the immune response by controlling all complement pathways. Inhibits these pathways by cleaving three peptide bonds in the alpha-chain of C3b and two bonds in the alpha-chain of C4b thereby inactivating these proteins. Essential cofactors for these reactions include factor H and C4BP in the fluid phase and membrane cofactor protein/CD46 and CR1 on cell surfaces. The presence of these cofactors on healthy cells allows degradation of deposited C3b by CFI in order to prevent undesired complement activation, while in apoptotic cells or microbes, the absence of such cofactors leads to C3b-mediated complement activation and subsequent opsonization. The sequence is that of Complement factor I (Cfi) from Mus musculus (Mouse).